Reading from the N-terminus, the 207-residue chain is Thymidylate kinase (207 aa).

ATP is bound at residue 7–14; it reads GCEGSGKS.

This sequence belongs to the thymidylate kinase family.

The enzyme catalyses dTMP + ATP = dTDP + ADP. Its function is as follows. Phosphorylation of dTMP to form dTDP in both de novo and salvage pathways of dTTP synthesis. The sequence is that of Thymidylate kinase from Chlamydia felis (strain Fe/C-56) (Chlamydophila felis).